The primary structure comprises 174 residues: 3-hydroxyanthranilate 3,4-dioxygenase (174 aa).

R47 lines the O2 pocket. Residues H51, E57, and H95 each coordinate Fe cation. Residue E57 coordinates substrate. Positions 99 and 110 each coordinate substrate. C125, C128, C162, and C165 together coordinate Fe cation.

This sequence belongs to the 3-HAO family. In terms of assembly, homodimer. Fe(2+) is required as a cofactor.

The enzyme catalyses 3-hydroxyanthranilate + O2 = (2Z,4Z)-2-amino-3-carboxymuconate 6-semialdehyde. It participates in cofactor biosynthesis; NAD(+) biosynthesis; quinolinate from L-kynurenine: step 3/3. Functionally, catalyzes the oxidative ring opening of 3-hydroxyanthranilate to 2-amino-3-carboxymuconate semialdehyde, which spontaneously cyclizes to quinolinate. In Paraburkholderia phytofirmans (strain DSM 17436 / LMG 22146 / PsJN) (Burkholderia phytofirmans), this protein is 3-hydroxyanthranilate 3,4-dioxygenase.